A 95-amino-acid polypeptide reads, in one-letter code: Secretoglobin family 2A member 2 (95 aa).

An N-terminal signal peptide occupies residues 1–18; it reads MKLVFLFLLVTIPICCYA. N-linked (GlcNAc...) asparagine glycosylation occurs at Asn35.

Belongs to the secretoglobin family. Lipophilin subfamily. In terms of assembly, prostatein is composed of three different peptides called C1, C2 and C3. These form covalent C1:C3 (F) and C2:C3 (S) heterodimers whose non-covalent association forms tetrameric (C1:C3/C3:C2) prostatein molecules. In terms of tissue distribution, highly expressed in ventral prostate.

The protein localises to the secreted. Its function is as follows. Part of prostatein which is the major secretory glycoprotein of ventral prostate gland. Steroid-binding protein; can bind non-polar steroids, cholesterol and a group of small proline-rich peptides. The sequence is that of Secretoglobin family 2A member 2 (Scgb2a2) from Rattus norvegicus (Rat).